Here is a 402-residue protein sequence, read N- to C-terminus: FMN-dependent alpha-hydroxy acid dehydrogenase qulF (402 aa).

Residues 22–394 (RLPAITTNPT…NRDCMRRISY (373 aa)) form the FMN hydroxy acid dehydrogenase domain. A 2-oxocarboxylate is bound at residue Tyr-48. Residues Ser-130 and Gln-152 each contribute to the FMN site. A 2-oxocarboxylate contacts are provided by Tyr-154 and Arg-189. An FMN-binding site is contributed by Lys-265. The Proton acceptor role is filled by His-289. Residue Arg-292 participates in a 2-oxocarboxylate binding. FMN is bound by residues 320 to 324 (DSGVR) and 343 to 344 (GR).

The protein belongs to the FMN-dependent alpha-hydroxy acid dehydrogenase family. FMN is required as a cofactor.

Its function is as follows. FMN-dependent alpha-hydroxy acid dehydrogenase; part of the gene cluster that mediates the biosynthesis of quinolactacin A2 (QUL A2), a fungal alkaloid that features a quinolone-gamma-lactam hybrid, which is a potential pharmacophore for the treatment of cancer and Alzheimer's disease. The quinolone-gamma-lactam hybrid scaffold is synthesized from the combination of L-isoleucine (L-Ile) and the nonproteinogenic amino acid L-kynurenine, followed by quinolone cyclization, oxidative decarboxylation, and lactam formation. Additionally, the N-methyl group is derived from methionine, which might be catalyzed by an S-adenosylmethionine (SAM)-dependent methyltransferase. Bioconversion of L-tryptophan to L-kynurenine could be catalyzed by the indoleamine-2,3-dioxygenase (IDO) qulI to produce an unstable product, N-formyl-L-kynurenine, followed by kynurenine formamidase catalyzed hydrolysis. QulM then acts as a methyltransferase that methylates L-kynurenine at the N-4 position. The FMN-dependent alpha-hydroxy acid dehydrogenase qulF than functions as an oxidative decarboxylase which converts N-methylkynurenine into 2-aminobenzoylacetamide via 2 tandem reactions, including dehydrogenation and decarboxylation. An amidase located outside of the qul gene cluster further produces the unstable beta-keto acid precursor N-methyl-2-aminobenzoylacetate, which could be spontaneously dehydrated to form N-methyl-4-hydroxy-2-quinolone. The NRPS qulB is able to incorporate N-methyl-2-aminobenzoylacetate and efficiently compete with the spontaneous reaction. By further extending the beta-keto acid with L-Ile, qulA performs a Dieckmann condensation to form the gamma-lactam ring and release a 4-ketopyrrolidinone intermediate from the assembly line. This intermediate could plausibly further undergo a spontaneous cyclization to yield the final quinolone-gamma-lactam hybrid structure. The sequence is that of FMN-dependent alpha-hydroxy acid dehydrogenase qulF from Penicillium citrinum.